Consider the following 117-residue polypeptide: U9-theraphotoxin-Hhn1a (117 aa).

A signal peptide spans 1 to 21; sequence MNTVRVTFLLVFVLAVSLGQA. Residues 22-75 constitute a propeptide that is removed on maturation; sequence DEDGNRMEMRQEIEKTEADSSYFAENLLLQKLEELEAKLWEETSEESRNSRQKR. Intrachain disulfides connect cysteine 76–cysteine 94, cysteine 83–cysteine 99, and cysteine 93–cysteine 114.

Belongs to the neurotoxin 14 (magi-1) family. 01 (HNTX-16) subfamily. In terms of tissue distribution, expressed by the venom gland.

It is found in the secreted. Functionally, probable ion channel inhibitor. The protein is U9-theraphotoxin-Hhn1a of Cyriopagopus hainanus (Chinese bird spider).